A 292-amino-acid chain; its full sequence is Phosphoribosylglycinamide formyltransferase, chloroplastic (292 aa).

Residues 1–65 (MESRVLFSSQ…KAASSTPQIV (65 aa)) constitute a chloroplast transit peptide. 88-90 (GSN) is a N(1)-(5-phospho-beta-D-ribosyl)glycinamide binding site. Residues 167–170 (LKLI) and asparagine 184 each bind (6R)-10-formyltetrahydrofolate. The active-site Proton donor is histidine 186. A (6R)-10-formyltetrahydrofolate-binding site is contributed by aspartate 227. Position 256 (glutamate 256) interacts with N(1)-(5-phospho-beta-D-ribosyl)glycinamide.

Belongs to the GART family.

It is found in the plastid. The protein resides in the chloroplast. The enzyme catalyses N(1)-(5-phospho-beta-D-ribosyl)glycinamide + (6R)-10-formyltetrahydrofolate = N(2)-formyl-N(1)-(5-phospho-beta-D-ribosyl)glycinamide + (6S)-5,6,7,8-tetrahydrofolate + H(+). Its pathway is purine metabolism; IMP biosynthesis via de novo pathway; N(2)-formyl-N(1)-(5-phospho-D-ribosyl)glycinamide from N(1)-(5-phospho-D-ribosyl)glycinamide (10-formyl THF route): step 1/1. The protein is Phosphoribosylglycinamide formyltransferase, chloroplastic (PUR3) of Arabidopsis thaliana (Mouse-ear cress).